The sequence spans 330 residues: Ferredoxin--NADP reductase (330 aa).

Residues glutamate 34, glutamine 42, tyrosine 47, valine 87, phenylalanine 121, aspartate 285, and serine 325 each coordinate FAD.

This sequence belongs to the ferredoxin--NADP reductase type 2 family. In terms of assembly, homodimer. The cofactor is FAD.

The catalysed reaction is 2 reduced [2Fe-2S]-[ferredoxin] + NADP(+) + H(+) = 2 oxidized [2Fe-2S]-[ferredoxin] + NADPH. This Limosilactobacillus fermentum (strain NBRC 3956 / LMG 18251) (Lactobacillus fermentum) protein is Ferredoxin--NADP reductase.